The following is a 366-amino-acid chain: tRNA 2-selenouridine synthase (366 aa).

The 124-residue stretch at 14–137 folds into the Rhodanese domain; that stretch reads LLENRPLIDV…IRSFLINTIE (124 aa). Cys-97 functions as the S-selanylcysteine intermediate in the catalytic mechanism.

It belongs to the SelU family. In terms of assembly, monomer.

It carries out the reaction 5-methylaminomethyl-2-thiouridine(34) in tRNA + selenophosphate + (2E)-geranyl diphosphate + H2O + H(+) = 5-methylaminomethyl-2-selenouridine(34) in tRNA + (2E)-thiogeraniol + phosphate + diphosphate. The catalysed reaction is 5-methylaminomethyl-2-thiouridine(34) in tRNA + (2E)-geranyl diphosphate = 5-methylaminomethyl-S-(2E)-geranyl-thiouridine(34) in tRNA + diphosphate. The enzyme catalyses 5-methylaminomethyl-S-(2E)-geranyl-thiouridine(34) in tRNA + selenophosphate + H(+) = 5-methylaminomethyl-2-(Se-phospho)selenouridine(34) in tRNA + (2E)-thiogeraniol. It catalyses the reaction 5-methylaminomethyl-2-(Se-phospho)selenouridine(34) in tRNA + H2O = 5-methylaminomethyl-2-selenouridine(34) in tRNA + phosphate. Functionally, involved in the post-transcriptional modification of the uridine at the wobble position (U34) of tRNA(Lys), tRNA(Glu) and tRNA(Gln). Catalyzes the conversion of 2-thiouridine (S2U-RNA) to 2-selenouridine (Se2U-RNA). Acts in a two-step process involving geranylation of 2-thiouridine (S2U) to S-geranyl-2-thiouridine (geS2U) and subsequent selenation of the latter derivative to 2-selenouridine (Se2U) in the tRNA chain. In Shewanella frigidimarina (strain NCIMB 400), this protein is tRNA 2-selenouridine synthase.